Reading from the N-terminus, the 346-residue chain is N-acetyl-gamma-glutamyl-phosphate reductase (346 aa).

Residue Cys-149 is part of the active site.

It belongs to the NAGSA dehydrogenase family. Type 1 subfamily.

It localises to the cytoplasm. The catalysed reaction is N-acetyl-L-glutamate 5-semialdehyde + phosphate + NADP(+) = N-acetyl-L-glutamyl 5-phosphate + NADPH + H(+). The protein operates within amino-acid biosynthesis; L-arginine biosynthesis; N(2)-acetyl-L-ornithine from L-glutamate: step 3/4. In terms of biological role, catalyzes the NADPH-dependent reduction of N-acetyl-5-glutamyl phosphate to yield N-acetyl-L-glutamate 5-semialdehyde. This Micrococcus luteus (strain ATCC 4698 / DSM 20030 / JCM 1464 / CCM 169 / CCUG 5858 / IAM 1056 / NBRC 3333 / NCIMB 9278 / NCTC 2665 / VKM Ac-2230) (Micrococcus lysodeikticus) protein is N-acetyl-gamma-glutamyl-phosphate reductase.